The following is a 172-amino-acid chain: Cytochrome c oxidase subunit 4 isoform 2, mitochondrial (172 aa).

The N-terminal 18 residues, 1–18 (MFSRATRSLVMKTGGLRT), are a transit peptide targeting the mitochondrion. The disordered stretch occupies residues 1–33 (MFSRATRSLVMKTGGLRTQGTHSPGSAASSSQR). Residues 16–33 (LRTQGTHSPGSAASSSQR) show a composition bias toward polar residues. The Mitochondrial matrix portion of the chain corresponds to 19–101 (QGTHSPGSAA…TFAEMNHRSN (83 aa)). The chain crosses the membrane as a helical span at residues 102-127 (EWKTVMGCVFFFIGFTALVIWWQRVY). The Mitochondrial intermembrane segment spans residues 128-172 (VFPKKVVTLTEERKAQQLQRLLDMKSNPIQGLSAHWDYEKKEWKK).

Belongs to the cytochrome c oxidase IV family. Component of the cytochrome c oxidase (complex IV, CIV), a multisubunit enzyme composed of 14 subunits. The complex is composed of a catalytic core of 3 subunits MT-CO1, MT-CO2 and MT-CO3, encoded in the mitochondrial DNA, and 11 supernumerary subunits COX4I, COX5A, COX5B, COX6A, COX6B, COX6C, COX7A, COX7B, COX7C, COX8 and NDUFA4, which are encoded in the nuclear genome. The complex exists as a monomer or a dimer and forms supercomplexes (SCs) in the inner mitochondrial membrane with NADH-ubiquinone oxidoreductase (complex I, CI) and ubiquinol-cytochrome c oxidoreductase (cytochrome b-c1 complex, complex III, CIII), resulting in different assemblies (supercomplex SCI(1)III(2)IV(1) and megacomplex MCI(2)III(2)IV(2)). Highly expressed in lung.

It localises to the mitochondrion inner membrane. It participates in energy metabolism; oxidative phosphorylation. Its function is as follows. Component of the cytochrome c oxidase, the last enzyme in the mitochondrial electron transport chain which drives oxidative phosphorylation. The respiratory chain contains 3 multisubunit complexes succinate dehydrogenase (complex II, CII), ubiquinol-cytochrome c oxidoreductase (cytochrome b-c1 complex, complex III, CIII) and cytochrome c oxidase (complex IV, CIV), that cooperate to transfer electrons derived from NADH and succinate to molecular oxygen, creating an electrochemical gradient over the inner membrane that drives transmembrane transport and the ATP synthase. Cytochrome c oxidase is the component of the respiratory chain that catalyzes the reduction of oxygen to water. Electrons originating from reduced cytochrome c in the intermembrane space (IMS) are transferred via the dinuclear copper A center (CU(A)) of subunit 2 and heme A of subunit 1 to the active site in subunit 1, a binuclear center (BNC) formed by heme A3 and copper B (CU(B)). The BNC reduces molecular oxygen to 2 water molecules using 4 electrons from cytochrome c in the IMS and 4 protons from the mitochondrial matrix. This is Cytochrome c oxidase subunit 4 isoform 2, mitochondrial (Cox4i2) from Rattus norvegicus (Rat).